The chain runs to 505 residues: Acetylcholine receptor subunit beta (505 aa).

The signal sequence occupies residues 1–24 (MTPGALLLLLLGVLGAHLAPGARG). At 25–245 (SEAEGRLREK…VTFYLIIRRK (221 aa)) the chain is on the extracellular side. Cys-152 and Cys-166 are disulfide-bonded. Asn-165 carries an N-linked (GlcNAc...) asparagine glycan. The next 3 helical transmembrane spans lie at 246–270 (PLFY…VFYL), 278–295 (MGLS…LLLL), and 312–333 (YLMF…VLNL). Over 334 to 473 (HHRSPHTHQM…WQFVAMVVDR (140 aa)) the chain is Cytoplasmic. The interval 365 to 391 (KPERDQMQEPPSIAPRDSPGSGWGRGT) is disordered. Position 394 is a phosphotyrosine; by Tyr-kinases (Tyr-394). The helical transmembrane segment at 474–492 (LFLWTFIIFTSVGTLVIFL) threads the bilayer.

This sequence belongs to the ligand-gated ion channel (TC 1.A.9) family. Acetylcholine receptor (TC 1.A.9.1) subfamily. Beta-1/CHRNB1 sub-subfamily. Pentamer of two alpha chains, and one each of the beta, delta, and gamma (in immature muscle) or epsilon (in mature muscle) chains. The muscle heteropentamer composed of alpha-1, beta-1, delta, epsilon subunits interacts with the alpha-conotoxin ImII.

Its subcellular location is the postsynaptic cell membrane. It is found in the cell membrane. It carries out the reaction K(+)(in) = K(+)(out). The enzyme catalyses Na(+)(in) = Na(+)(out). Functionally, after binding acetylcholine, the AChR responds by an extensive change in conformation that affects all subunits and leads to opening of an ion-conducting channel across the plasma membrane. This is Acetylcholine receptor subunit beta (CHRNB1) from Bos taurus (Bovine).